The chain runs to 489 residues: Dihydropyrimidinase 1 (489 aa).

Histidine 61, histidine 63, and lysine 156 together coordinate Zn(2+). Residue lysine 156 is modified to N6-carboxylysine. Tyrosine 161 contacts substrate. The Zn(2+) site is built by histidine 189 and histidine 245. Serine 295 is a binding site for substrate. Aspartate 323 provides a ligand contact to Zn(2+). Asparagine 344 is a substrate binding site.

The protein belongs to the metallo-dependent hydrolases superfamily. Hydantoinase/dihydropyrimidinase family. As to quaternary structure, homotetramer. It depends on Zn(2+) as a cofactor. Post-translationally, carboxylation allows a single lysine to coordinate two zinc ions. In terms of tissue distribution, in L1-L2 larvae, expressed in body hypodermal cells, hemidesmosomes and in a neuronal cell between the pharynx and ring neuropil. In adults, expression is seen in body hypodermal cells and pharynx.

Its subcellular location is the nucleus. The enzyme catalyses 5,6-dihydrouracil + H2O = 3-(carbamoylamino)propanoate + H(+). This Caenorhabditis elegans protein is Dihydropyrimidinase 1 (dhp-1).